Consider the following 231-residue polypeptide: ADP-ribose pyrophosphatase (231 aa).

An N-acetylserine modification is found at F2. Substrate-binding positions include W46, 64 to 65 (WD), R69, and R103. The Nudix hydrolase domain occupies 75–214 (GGVDGIGILT…DQQGYKLDAR (140 aa)). Mg(2+) is bound at residue A115. Residues 116–137 (GLIDAGEDIDTAALRELKEETG) carry the Nudix box motif. L117 serves as a coordination point for substrate. Residues E131 and E135 each contribute to the Mg(2+) site. D152 lines the substrate pocket. E185 contacts Mg(2+).

This sequence belongs to the Nudix hydrolase family. NudF subfamily. Requires Mg(2+) as cofactor. Mn(2+) serves as cofactor.

It carries out the reaction ADP-D-ribose + H2O = D-ribose 5-phosphate + AMP + 2 H(+). This Saccharomyces cerevisiae (strain ATCC 204508 / S288c) (Baker's yeast) protein is ADP-ribose pyrophosphatase (YSA1).